Reading from the N-terminus, the 270-residue chain is 4-hydroxy-tetrahydrodipicolinate reductase (270 aa).

Residues G8 to M13, D34, G102 to T104, and S128 to Y131 each bind NAD(+). H160 serves as the catalytic Proton donor/acceptor. Residue H161 coordinates (S)-2,3,4,5-tetrahydrodipicolinate. The Proton donor role is filled by K164. Residue G170–T171 coordinates (S)-2,3,4,5-tetrahydrodipicolinate.

It belongs to the DapB family.

Its subcellular location is the cytoplasm. The enzyme catalyses (S)-2,3,4,5-tetrahydrodipicolinate + NAD(+) + H2O = (2S,4S)-4-hydroxy-2,3,4,5-tetrahydrodipicolinate + NADH + H(+). It carries out the reaction (S)-2,3,4,5-tetrahydrodipicolinate + NADP(+) + H2O = (2S,4S)-4-hydroxy-2,3,4,5-tetrahydrodipicolinate + NADPH + H(+). It participates in amino-acid biosynthesis; L-lysine biosynthesis via DAP pathway; (S)-tetrahydrodipicolinate from L-aspartate: step 4/4. Catalyzes the conversion of 4-hydroxy-tetrahydrodipicolinate (HTPA) to tetrahydrodipicolinate. This Methanococcus vannielii (strain ATCC 35089 / DSM 1224 / JCM 13029 / OCM 148 / SB) protein is 4-hydroxy-tetrahydrodipicolinate reductase.